The following is a 2473-amino-acid chain: Neurogenic locus notch homolog protein 2 (2473 aa).

A signal peptide spans 1-25 (MPALRPAALRALLWLWLCGAGPAHA). 4 consecutive EGF-like domains span residues 26–63 (LQCRGGQEPCVNEGTCVTYHNGTGFCRCPEGFLGEYCQ), 64–102 (HRDPCEKNRCQNGGTCVPQGMLGKATCRCAPGFTGEDCQ), 105–143 (TSHPCFVSRPCQNGGTCHMLSRDTYECTCQVGFTGKQCQ), and 144–180 (WTDACLSHPCENGSTCTSVASQFSCKCPAGLTGQKCE). At 26 to 1679 (LQCRGGQEPC…SELESPRNAQ (1654 aa)) the chain is on the extracellular side. Disulfide bonds link Cys-28–Cys-41, Cys-35–Cys-51, Cys-53–Cys-62, Cys-68–Cys-79, Cys-73–Cys-90, Cys-92–Cys-101, Cys-109–Cys-121, Cys-115–Cys-131, Cys-133–Cys-142, Cys-148–Cys-159, Cys-153–Cys-168, Cys-170–Cys-179, Cys-186–Cys-198, Cys-192–Cys-207, Cys-209–Cys-218, Cys-230–Cys-246, Cys-248–Cys-257, Cys-264–Cys-275, Cys-269–Cys-284, Cys-286–Cys-295, Cys-302–Cys-315, Cys-309–Cys-324, Cys-326–Cys-335, Cys-342–Cys-353, Cys-347–Cys-362, Cys-364–Cys-373, Cys-379–Cys-390, Cys-384–Cys-401, Cys-403–Cys-412, Cys-419–Cys-433, Cys-427–Cys-442, Cys-444–Cys-453, Cys-460–Cys-471, Cys-465–Cys-480, Cys-482–Cys-491, Cys-498–Cys-509, Cys-503–Cys-518, Cys-520–Cys-529, Cys-536–Cys-547, Cys-541–Cys-556, Cys-558–Cys-567, Cys-574–Cys-584, Cys-579–Cys-593, Cys-595–Cys-604, Cys-611–Cys-622, Cys-616–Cys-631, Cys-633–Cys-642, Cys-649–Cys-659, Cys-654–Cys-668, Cys-670–Cys-679, Cys-686–Cys-697, Cys-691–Cys-706, Cys-708–Cys-717, Cys-724–Cys-734, Cys-729–Cys-743, Cys-745–Cys-754, Cys-761–Cys-772, Cys-766–Cys-781, Cys-783–Cys-792, Cys-799–Cys-810, Cys-804–Cys-819, Cys-821–Cys-830, Cys-837–Cys-848, Cys-842–Cys-859, Cys-861–Cys-870, Cys-877–Cys-888, Cys-882–Cys-897, Cys-899–Cys-908, Cys-915–Cys-926, Cys-920–Cys-935, Cys-937–Cys-946, Cys-953–Cys-964, Cys-958–Cys-973, Cys-975–Cys-984, Cys-991–Cys-1002, Cys-996–Cys-1011, Cys-1013–Cys-1022, Cys-1029–Cys-1040, Cys-1034–Cys-1049, Cys-1051–Cys-1060, Cys-1067–Cys-1078, Cys-1072–Cys-1087, and Cys-1089–Cys-1098. Asn-46 carries an N-linked (GlcNAc...) asparagine glycan. N-linked (GlcNAc...) asparagine glycosylation is present at Asn-155. Residues 182 to 219 (DINECDIPGRCQHGGTCLNLPGSYRCQCPQGFTGQHCD) form the EGF-like 5; calcium-binding domain. Residues 221–258 (PYVPCAPSPCVNGGTCRQTGDFTFECNCLPGFEGSTCE) enclose the EGF-like 6; incomplete domain. The EGF-like 7; calcium-binding domain maps to 260–296 (NIDDCPNHKCQNGGVCVDGVNTYNCRCPPQWTGQFCT). The EGF-like 8; calcium-binding domain occupies 298 to 336 (DVDECLLQPNACQNGGTCTNRNGGYGCVCVNGWSGDDCS). The EGF-like 9; calcium-binding domain occupies 338 to 374 (NIDDCAYASCTPGSTCIDRVASFSCLCPEGKAGLLCH). In terms of domain architecture, EGF-like 10 spans 375 to 413 (LDDACISNPCHKGALCDTNPLNGQYICTCPQGYKGADCT). One can recognise an EGF-like 11; calcium-binding domain in the interval 415–454 (DVDECAMANSNPCEHAGKCVNTDGAFHCECLKGYAGPRCE). In terms of domain architecture, EGF-like 12; calcium-binding spans 456 to 492 (DINECHSDPCQNDATCLDKIGGFTCLCMPGFKGVHCE). Positions 494–530 (EVNECQSNPCVNNGQCVDKVNRFQCLCPPGFTGPVCQ) constitute an EGF-like 13; calcium-binding domain. The region spanning 532-568 (DIDDCSSTPCLNGAKCIDHPNGYECQCATGFTGILCD) is the EGF-like 14; calcium-binding domain. One can recognise an EGF-like 15; calcium-binding domain in the interval 570-605 (NIDNCDPDPCHHGQCQDGIDSYTCICNPGYMGAICS). The 37-residue stretch at 607-643 (QIDECYSSPCLNDGRCIDLVNGYQCNCQPGTSGLNCE) folds into the EGF-like 16; calcium-binding domain. A glycan (O-linked (Glc...) serine; alternate) is linked at Ser-613. An O-linked (Xyl...) serine; alternate glycan is attached at Ser-613. Residues 645 to 680 (NFDDCASNPCMHGVCVDGINRYSCVCSPGFTGQRCN) enclose the EGF-like 17; calcium-binding domain. The 37-residue stretch at 682–718 (DIDECASNPCRKGATCINDVNGFRCICPEGPHHPSCY) folds into the EGF-like 18; calcium-binding domain. Positions 720–755 (QVNECLSNPCIHGNCTGGLSGYKCLCDAGWVGVNCE) constitute an EGF-like 19 domain. N-linked (GlcNAc...) asparagine glycosylation occurs at Asn-733. The EGF-like 20; calcium-binding domain occupies 757–793 (DKNECLSNPCQNGGTCNNLVNGYRCTCKKGFKGYNCQ). Positions 795–831 (NIDECASNPCLNQGTCFDDVSGYTCHCMLPYTGKNCQ) constitute an EGF-like 21; calcium-binding domain. The EGF-like 22 domain maps to 833-871 (VLAPCSPNPCENAAVCKEAPNFESFSCLCAPGWQGKRCT). An EGF-like 23; calcium-binding domain is found at 873–909 (DVDECISKPCMNNGVCHNTQGSYVCECPPGFSGMDCE). The EGF-like 24; calcium-binding domain occupies 911–947 (DINDCLANPCQNGGSCVDHVNTFSCQCHPGFIGDKCQ). In terms of domain architecture, EGF-like 25; calcium-binding spans 949–985 (DMNECLSEPCKNGGTCSDYVNSYTCTCPAGFHGVHCE). The region spanning 987–1023 (NIDECTESSCFNGGTCVDGINSFSCLCPVGFTGPFCL) is the EGF-like 26; calcium-binding domain. Positions 1025 to 1061 (DINECSSNPCLNAGTCVDGLGTYRCICPLGYTGKNCQ) constitute an EGF-like 27; calcium-binding domain. EGF-like domains are found at residues 1063-1099 (LVNLCSRSPCKNKGTCVQEKARPHCLCPPGWDGAYCD) and 1101-1147 (LNVS…SYCE). Asn-1102 is a glycosylation site (N-linked (GlcNAc...) asparagine). 24 disulfides stabilise this stretch: Cys-1105/Cys-1126, Cys-1120/Cys-1135, Cys-1137/Cys-1146, Cys-1153/Cys-1164, Cys-1158/Cys-1173, Cys-1175/Cys-1184, Cys-1191/Cys-1202, Cys-1196/Cys-1211, Cys-1213/Cys-1222, Cys-1229/Cys-1241, Cys-1235/Cys-1250, Cys-1252/Cys-1261, Cys-1268/Cys-1281, Cys-1273/Cys-1290, Cys-1292/Cys-1301, Cys-1308/Cys-1319, Cys-1313/Cys-1331, Cys-1333/Cys-1346, Cys-1378/Cys-1389, Cys-1383/Cys-1400, Cys-1402/Cys-1411, Cys-1425/Cys-1448, Cys-1430/Cys-1443, and Cys-1439/Cys-1455. The 37-residue stretch at 1149 to 1185 (QLDECASNPCQHGATCNDFIGGYRCECVPGYQGVNCE) folds into the EGF-like 30; calcium-binding domain. In terms of domain architecture, EGF-like 31; calcium-binding spans 1187 to 1223 (EVDECQNQPCQNGGTCIDLVNHFKCSCPPGTRGLLCE). An EGF-like 32; calcium-binding domain is found at 1225-1262 (NIDECAGGPHCLNGGQCVDRIGGYTCRCLPGFAGERCE). EGF-like domains follow at residues 1264 to 1302 (DINECLSNPCSSEGSLDCVQLKNNYNCICRSAFTGRHCE), 1304 to 1343 (FLDVCPQKPCLNGGTCAVASNMPDGFICRCPPGFSGARCQ), and 1375 to 1412 (ESGCASNPCQHGGTCYPQRQPPHYSCRCPPSFGGSHCE). LNR repeat units follow at residues 1425 to 1465 (CQSQ…PWAN), 1466 to 1502 (CTSTLRCWEYINNQCDEQCNTAECLFDNFECQRNSKT), and 1503 to 1544 (CKYD…NLAE). The negative regulatory region (NRR) stretch occupies residues 1425–1679 (CQSQYCADKA…SELESPRNAQ (255 aa)). Asn-1465 is a glycosylation site (N-linked (GlcNAc...) asparagine). 7 cysteine pairs are disulfide-bonded: Cys-1466/Cys-1489, Cys-1472/Cys-1484, Cys-1480/Cys-1496, Cys-1503/Cys-1527, Cys-1509/Cys-1522, Cys-1518/Cys-1534, and Cys-1634/Cys-1641. A helical transmembrane segment spans residues 1680-1700 (LLYLLAVAVVIILFFILLGVI). The Cytoplasmic segment spans residues 1701 to 2473 (MAKRKRKHGF…PPHSNMQVYA (773 aa)). Phosphothreonine is present on Thr-1718. Residues 1755 to 1778 (GTSEHWVDDEGPQPKKAKAEDEAL) form a disordered region. Ser-1780 is subject to Phosphoserine. At Thr-1803 the chain carries Phosphothreonine. Ser-1805 bears the Phosphoserine mark. Thr-1809 carries the phosphothreonine modification. ANK repeat units follow at residues 1828 to 1872 (DGCT…SLQA), 1877 to 1906 (TGEMALHLAARYSRADAAKRLLDAGADANA), 1910 to 1940 (MGRCPLHAAVAADAQGVFQILIRNRVTDLDA), 1944 to 1973 (DGTTPLILAARLAVEGMVAELINCQADVNA), 1977 to 2006 (HGKSALHWAAAVNNVEATLLLLKNGANRDM), and 2010 to 2039 (KEETPLFLAAREGSYEAAKILLDHFANRDI). A phosphoserine mark is found at Ser-1843 and Ser-1846. Phosphoserine is present on residues Ser-2071, Ser-2079, and Ser-2082. Thr-2098 bears the Phosphothreonine mark. Disordered regions lie at residues 2098–2117 (TPMGKKARRPNTKSTMPTSL), 2122–2169 (KEAK…TSSP), and 2382–2473 (VGKY…QVYA). The span at 2099–2108 (PMGKKARRPN) shows a compositional bias: basic residues. 2 stretches are compositionally biased toward polar residues: residues 2140-2151 (VQLSESSVTLSP) and 2390-2400 (SQHSYASSNAA). Residues 2419–2446 (PSPESPDQWSSSSPHSASDWSDVTTSPT) are compositionally biased toward low complexity. Residues 2447–2456 (PGGGGGGQRG) show a composition bias toward gly residues.

The protein belongs to the NOTCH family. In terms of assembly, heterodimer of a C-terminal fragment N(TM) and an N-terminal fragment N(EC) which are probably linked by disulfide bonds. Interacts with MAML1, MAML2 and MAML3 which act as transcriptional coactivators for NOTCH2. Interacts with RELA/p65. Interacts with HIF1AN. Interacts (via ANK repeats) with TCIM, the interaction inhibits the nuclear translocation of NOTCH2 N2ICD. Interacts with CUL1, RBX1, SKP1 and FBXW7 that are SCF(FBXW7) E3 ubiquitin-protein ligase complex components. Interacts with MINAR1; this interaction increases MINAR1 stability and function. Interacts with MDK; this interaction mediates a nuclear accumulation of NOTCH2 and therefore activation of NOTCH2 signaling leading to interaction between HES1 and STAT3. Interacts with MINAR2. Post-translationally, synthesized in the endoplasmic reticulum as an inactive form which is proteolytically cleaved by a furin-like convertase in the trans-Golgi network before it reaches the plasma membrane to yield an active, ligand-accessible form. Cleavage results in a C-terminal fragment N(TM) and a N-terminal fragment N(EC). Following ligand binding, it is cleaved by TNF-alpha converting enzyme (TACE) to yield a membrane-associated intermediate fragment called notch extracellular truncation (NEXT). This fragment is then cleaved by presenilin dependent gamma-secretase to release a notch-derived peptide containing the intracellular domain (NICD) from the membrane. In terms of processing, hydroxylated by HIF1AN. Can be either O-glucosylated or O-xylosylated at Ser-613 by POGLUT1. Post-translationally, phosphorylated by GSK3. GSK3-mediated phosphorylation is necessary for NOTCH2 recognition by FBXW7, ubiquitination and degradation via the ubiquitin proteasome pathway. Expressed in the brain, liver, kidney, neuroepithelia, somites, optic vesicles and branchial arches, but not heart.

The protein resides in the cell membrane. The protein localises to the nucleus. Its subcellular location is the cytoplasm. Functionally, functions as a receptor for membrane-bound ligands Jagged-1 (JAG1), Jagged-2 (JAG2) and Delta-1 (DLL1) to regulate cell-fate determination. Upon ligand activation through the released notch intracellular domain (NICD) it forms a transcriptional activator complex with RBPJ/RBPSUH and activates genes of the enhancer of split locus. Affects the implementation of differentiation, proliferation and apoptotic programs. May play an essential role in postimplantation development, probably in some aspect of cell specification and/or differentiation. In collaboration with RELA/p65 enhances NFATc1 promoter activity and positively regulates RANKL-induced osteoclast differentiation. Positively regulates self-renewal of liver cancer cells. In Mus musculus (Mouse), this protein is Neurogenic locus notch homolog protein 2.